Consider the following 272-residue polypeptide: MARLAAFDMDGTLLMPDHHLGRETIATLSRLRERDITLTFATGRHVLEMRHILGTLSLDAYLITGNGTRIHSLEGDVLHRQDLDPQVADTVMHHAWDTRASMHVFNDNGWFTGQEIPALLQAHVYSGFRYQVIDIKSIPAHQVTKICFCGDHDDLIRLRIQLNEALEERAHLCFSAVDCLEVLPLGGNKGSALAVLSNHLGLSLADCMAFGDAMNDREMLGSVGRGLIMGNAMPQLIAALPHLSVIGHCGNQAVSHFLTHWLDNPHLPYSPE.

Asp-8 functions as the Nucleophile in the catalytic mechanism. Residues Asp-8, Asp-10, and Asp-212 each contribute to the Mg(2+) site.

This sequence belongs to the HAD-like hydrolase superfamily. Cof family. Requires Mg(2+) as cofactor.

It catalyses the reaction 4-amino-2-methyl-5-(diphosphooxymethyl)pyrimidine + H2O = 4-amino-2-methyl-5-(phosphooxymethyl)pyrimidine + phosphate + H(+). Functionally, catalyzes the hydrolysis of 4-amino-2-methyl-5-hydroxymethylpyrimidine pyrophosphate (HMP-PP) to 4-amino-2-methyl-5-hydroxymethylpyrimidine phosphate (HMP-P). The chain is HMP-PP phosphatase from Salmonella choleraesuis (strain SC-B67).